An 880-amino-acid chain; its full sequence is Leucine--tRNA ligase (880 aa).

A 'HIGH' region motif is present at residues 46–56 (PYPSGALHMGH). A disordered region spans residues 483 to 502 (SPIKTEPTWRQTTCPDCGGP). Residues 638-642 (KMSKS) carry the 'KMSKS' region motif. Lysine 641 is an ATP binding site.

This sequence belongs to the class-I aminoacyl-tRNA synthetase family.

It localises to the cytoplasm. It catalyses the reaction tRNA(Leu) + L-leucine + ATP = L-leucyl-tRNA(Leu) + AMP + diphosphate. This is Leucine--tRNA ligase from Xanthomonas oryzae pv. oryzae (strain PXO99A).